Reading from the N-terminus, the 300-residue chain is Mitochondrial tricarboxylate transporter 1 (300 aa).

Solcar repeat units follow at residues 8 to 98 (VSPS…FRSM), 107 to 197 (LSNS…LRDW), and 209 to 294 (INWL…VVWL). Helical transmembrane passes span 11–31 (SVSVVAGATAGAVEGVATFPI), 67–87 (PKGLFRGCTAMVVGNAGKAGV), 114–134 (LAGMGAGTLEAIFAVTPSETI), 172–191 (GVVPVVMRQGSASAIRLGTY), 208–228 (LINWLATFSIGAASGVVAVYG), and 277–297 (LIVSGGVIFSVYEQVVWLLAG).

The protein belongs to the mitochondrial carrier (TC 2.A.29) family.

Its subcellular location is the mitochondrion membrane. Its function is as follows. Mitochondrial tricarboxylate transporter; part of the gene cluster that mediates the biosynthesis of itaconic acid and 2-hydroxyparaconate. Cis-aconitate is secreted by the mitochondrial tricarboxylate transporter MTT1. In the cytosol cis-aconitate is converted into trans-aconitate via isomerization by the aconitate-delta-isomerase ADI1. Decarboxylation of trans-aconitate by the trans-aconitate decarboxylase TAD1 then leads then to the production of itaconic acid. The cytochrome P450 monooxygenase CYP3 further converts itaconate to 2-hydroxyparaconate via oxidation of the double bond, leading to a transient epoxide, which can subsequently be lactonized to produce 2-hydroxyparaconate. Secretion of itaconate and possibly 2-hydroxyparaconate into the medium is mediated by the major facilitator ITP1. The glyoxalase domain-containing protein RDO1 is not involved in the biosynthesis of itaconate and 2-hydroxyparaconate, however, it might play a role in the further conversion of 2-hydroxyparaconate to itatartarate. The chain is Mitochondrial tricarboxylate transporter 1 from Mycosarcoma maydis (Corn smut fungus).